The chain runs to 600 residues: Pentatricopeptide repeat-containing protein At3g29230 (600 aa).

PPR repeat units follow at residues 50–80 (DLHIAPKLISALSLCRQTNLAVRVFNQVQEP), 81–115 (NVHLCNSLIRAHAQNSQPYQAFFVFSEMQRFGLFA), 116–150 (DNFTYPFLLKACSGQSWLPVVKMMHNHIEKLGLSS), 151–183 (DIYVPNALIDCYSRCGGLGVRDAMKLFEKMSER), 184–218 (DTVSWNSMLGGLVKAGELRDARRLFDEMPQRDLIS), 219–245 (WNTMLDGYARCREMSKAFELFEKMPER), 246–276 (NTVSWSTMVMGYSKAGDMEMARVMFDKMPLP), 279–313 (NVVTWTIIIAGYAEKGLLKEADRLVDQMVASGLKF), 314–348 (DAAAVISILAACTESGLLSLGMRIHSILKRSNLGS), 349–379 (NAYVLNALLDMYAKCGNLKKAFDVFNDIPKK), 380–414 (DLVSWNTMLHGLGVHGHGKEAIELFSRMRREGIRP), 415–445 (DKVTFIAVLCSCNHAGLIDEGIDYFYSMEKV), and 451–481 (QVEHYGCLVDLLGRVGRLKEAIKVVQTMPME). The interval 486-561 (IWGALLGACR…PSGASSVELE (76 aa)) is type E motif. Positions 562–592 (DGIHEFTVFDKSHPKSDQIYQMLGSLIEPPD) are type E(+) motif.

Belongs to the PPR family. PCMP-E subfamily.

The chain is Pentatricopeptide repeat-containing protein At3g29230 (PCMP-E27) from Arabidopsis thaliana (Mouse-ear cress).